Reading from the N-terminus, the 137-residue chain is L-ectoine synthase (137 aa).

The disordered stretch occupies residues 118-137 (VHREDGSYAPADEADDQKPL).

Belongs to the ectoine synthase family.

The catalysed reaction is (2S)-4-acetamido-2-aminobutanoate = L-ectoine + H2O. The protein operates within amine and polyamine biosynthesis; ectoine biosynthesis; L-ectoine from L-aspartate 4-semialdehyde: step 3/3. Its activity is regulated as follows. Seems to require potassium ions for its activity and stability. Slightly inhibited by N-ethylmaleimide. In terms of biological role, catalyzes the circularization of gamma-N-acetyl-alpha,gamma-diaminobutyric acid (ADABA) to ectoine (1,4,5,6-tetrahydro-2-methyl-4-pyrimidine carboxylic acid), which is an excellent osmoprotectant. Does not act on N-acetylated amino acids like N-alpha-acetyl-L-asparagine,N-alpha-acetyl-L-ornithine, N-alpha-acetyl-L-lysine and N-epsilon-acetyl-L-lysine. In Halomonas elongata (strain ATCC 33173 / DSM 2581 / NBRC 15536 / NCIMB 2198 / 1H9), this protein is L-ectoine synthase (ectC).